The chain runs to 478 residues: Aspartyl/glutamyl-tRNA(Asn/Gln) amidotransferase subunit B (478 aa).

This sequence belongs to the GatB/GatE family. GatB subfamily. In terms of assembly, heterotrimer of A, B and C subunits.

The catalysed reaction is L-glutamyl-tRNA(Gln) + L-glutamine + ATP + H2O = L-glutaminyl-tRNA(Gln) + L-glutamate + ADP + phosphate + H(+). It carries out the reaction L-aspartyl-tRNA(Asn) + L-glutamine + ATP + H2O = L-asparaginyl-tRNA(Asn) + L-glutamate + ADP + phosphate + 2 H(+). Its function is as follows. Allows the formation of correctly charged Asn-tRNA(Asn) or Gln-tRNA(Gln) through the transamidation of misacylated Asp-tRNA(Asn) or Glu-tRNA(Gln) in organisms which lack either or both of asparaginyl-tRNA or glutaminyl-tRNA synthetases. The reaction takes place in the presence of glutamine and ATP through an activated phospho-Asp-tRNA(Asn) or phospho-Glu-tRNA(Gln). The protein is Aspartyl/glutamyl-tRNA(Asn/Gln) amidotransferase subunit B of Alkalilimnicola ehrlichii (strain ATCC BAA-1101 / DSM 17681 / MLHE-1).